The following is a 509-amino-acid chain: Autophagy-related protein 16 (509 aa).

7 WD repeats span residues 223–262 (AHEG…LIKS), 265–304 (GSLG…VRHT), 307–347 (GHTD…CTNT), 349–388 (LFTS…LLSE), 391–430 (GHSS…ICGT), 437–478 (RLAS…SILK), and 480–509 (QTSP…CTWT).

It belongs to the WD repeat ATG16 family.

In terms of biological role, may play a role in autophagy. This Arabidopsis thaliana (Mouse-ear cress) protein is Autophagy-related protein 16.